A 347-amino-acid polypeptide reads, in one-letter code: Anthranilate phosphoribosyltransferase (347 aa).

Residues G88, 91-92, T96, 98-101, 116-124, and S128 contribute to the 5-phospho-alpha-D-ribose 1-diphosphate site; these read GD, NIST, and KHGNRSVSS. G88 lines the anthranilate pocket. S100 contributes to the Mg(2+) binding site. N119 serves as a coordination point for anthranilate. R174 is a binding site for anthranilate. Mg(2+)-binding residues include D232 and E233.

It belongs to the anthranilate phosphoribosyltransferase family. As to quaternary structure, homodimer. The cofactor is Mg(2+).

The catalysed reaction is N-(5-phospho-beta-D-ribosyl)anthranilate + diphosphate = 5-phospho-alpha-D-ribose 1-diphosphate + anthranilate. Its pathway is amino-acid biosynthesis; L-tryptophan biosynthesis; L-tryptophan from chorismate: step 2/5. Its function is as follows. Catalyzes the transfer of the phosphoribosyl group of 5-phosphorylribose-1-pyrophosphate (PRPP) to anthranilate to yield N-(5'-phosphoribosyl)-anthranilate (PRA). This chain is Anthranilate phosphoribosyltransferase, found in Shewanella oneidensis (strain ATCC 700550 / JCM 31522 / CIP 106686 / LMG 19005 / NCIMB 14063 / MR-1).